Reading from the N-terminus, the 98-residue chain is NADH-ubiquinone oxidoreductase chain 4L (98 aa).

Transmembrane regions (helical) follow at residues 1 to 21, 28 to 48, and 59 to 79; these read MMPI…GTLI, STLL…AMLI, and APLI…ALLV.

The protein belongs to the complex I subunit 4L family. As to quaternary structure, core subunit of respiratory chain NADH dehydrogenase (Complex I) which is composed of 45 different subunits.

It is found in the mitochondrion inner membrane. It carries out the reaction a ubiquinone + NADH + 5 H(+)(in) = a ubiquinol + NAD(+) + 4 H(+)(out). In terms of biological role, core subunit of the mitochondrial membrane respiratory chain NADH dehydrogenase (Complex I) which catalyzes electron transfer from NADH through the respiratory chain, using ubiquinone as an electron acceptor. Part of the enzyme membrane arm which is embedded in the lipid bilayer and involved in proton translocation. The polypeptide is NADH-ubiquinone oxidoreductase chain 4L (MT-ND4L) (Petaurus breviceps (Australian sugar glider)).